A 301-amino-acid chain; its full sequence is Probable alpha-L-glutamate ligase (301 aa).

Residues 104 to 287 form the ATP-grasp domain; it reads LQLLSRKGIG…IAGLIVAYME (184 aa). ATP-binding positions include Lys141, 178–179, Asp187, and 211–213; these read EF and RSN. Residues Asp248, Glu260, and Asn262 each coordinate Mg(2+). Mn(2+) contacts are provided by Asp248, Glu260, and Asn262.

The protein belongs to the RimK family. Mg(2+) serves as cofactor. It depends on Mn(2+) as a cofactor.

In Cellvibrio japonicus (strain Ueda107) (Pseudomonas fluorescens subsp. cellulosa), this protein is Probable alpha-L-glutamate ligase.